A 1433-amino-acid chain; its full sequence is DNA polymerase III PolC-type (1433 aa).

The 157-residue stretch at 419–575 (FVVFDVETTG…YDAEATGHLL (157 aa)) folds into the Exonuclease domain.

It belongs to the DNA polymerase type-C family. PolC subfamily.

It is found in the cytoplasm. It carries out the reaction DNA(n) + a 2'-deoxyribonucleoside 5'-triphosphate = DNA(n+1) + diphosphate. In terms of biological role, required for replicative DNA synthesis. This DNA polymerase also exhibits 3' to 5' exonuclease activity. The sequence is that of DNA polymerase III PolC-type from Halalkalibacterium halodurans (strain ATCC BAA-125 / DSM 18197 / FERM 7344 / JCM 9153 / C-125) (Bacillus halodurans).